Consider the following 254-residue polypeptide: Triosephosphate isomerase (254 aa).

9 to 11 (NWK) contributes to the substrate binding site. The Electrophile role is filled by His96. The active-site Proton acceptor is Glu169. Substrate-binding positions include Gly175, Ser215, and 236–237 (GG).

This sequence belongs to the triosephosphate isomerase family. In terms of assembly, homodimer.

It localises to the cytoplasm. It catalyses the reaction D-glyceraldehyde 3-phosphate = dihydroxyacetone phosphate. Its pathway is carbohydrate biosynthesis; gluconeogenesis. It participates in carbohydrate degradation; glycolysis; D-glyceraldehyde 3-phosphate from glycerone phosphate: step 1/1. Functionally, involved in the gluconeogenesis. Catalyzes stereospecifically the conversion of dihydroxyacetone phosphate (DHAP) to D-glyceraldehyde-3-phosphate (G3P). The protein is Triosephosphate isomerase of Borrelia hermsii (strain HS1 / DAH).